The following is a 473-amino-acid chain: Calcium/calmodulin-dependent protein kinase type IV (473 aa).

2 positions are modified to phosphoserine; by autocatalysis: S12 and S13. A Protein kinase domain is found at 46 to 300 (FEVESELGRG…TFQALQHPWV (255 aa)). Residues 52 to 60 (LGRGATSIV) and K75 contribute to the ATP site. T57 carries an O-linked (GlcNAc) threonine glycan. An O-linked (GlcNAc) serine glycan is attached at S58. S137 carries O-linked (GlcNAc) serine glycosylation. The active-site Proton acceptor is D164. Residue S189 is glycosylated (O-linked (GlcNAc) serine). The residue at position 200 (T200) is a Phosphothreonine; by CaMKK1 and CaMKK2. Residues 305–321 (ANFVHMDTAQKKLQEFN) form an autoinhibitory domain region. Positions 306 to 323 (NFVHMDTAQKKLQEFNAR) are PP2A-binding. The calmodulin-binding stretch occupies residues 322–341 (ARRKLKAAVKAVVASSRLGS). Position 336 is a phosphoserine; by autocatalysis (S336). A Phosphoserine modification is found at S341. Low complexity predominate over residues 341–350 (SASSSHGSIQ). Disordered stretches follow at residues 341 to 368 (SASSSHGSIQESHKASRDPSPIQDGNED) and 445 to 473 (EEAAAPREGQGSSAVGFEVPQQDVILPEY). O-linked (GlcNAc) serine glycosylation is found at S344, S345, and S356. S360 is subject to Phosphoserine.

The protein belongs to the protein kinase superfamily. CAMK Ser/Thr protein kinase family. CaMK subfamily. Monomer. Interacts with protein phosphatase 2A (PPP2CA/PPP2CB); the interaction is mutually exclusive with binding to Ca(2+)/calmodulin. In terms of processing, phosphorylated by CaMKK1 and CaMKK2 on Thr-200. Dephosphorylated by protein phosphatase 2A. Autophosphorylated on Ser-12 and Ser-13. Post-translationally, glycosylation at Ser-189 modulates the phosphorylation of CaMK4 at Thr-200 and negatively regulates its activity toward CREB1 in basal conditions and during early inomycin stimulation. As to expression, expressed in brain, thymus, CD4 T-cells, testis and epithelial ovarian cancer tissue.

The protein localises to the cytoplasm. The protein resides in the nucleus. The enzyme catalyses L-seryl-[protein] + ATP = O-phospho-L-seryl-[protein] + ADP + H(+). The catalysed reaction is L-threonyl-[protein] + ATP = O-phospho-L-threonyl-[protein] + ADP + H(+). With respect to regulation, activated by Ca(2+)/calmodulin. Binding of calmodulin results in conformational change that relieves intrasteric autoinhibition and allows phosphorylation of Thr-200 within the activation loop by CaMKK1 or CaMKK2. Phosphorylation of Thr-200 results in a 10-20-fold increase in total activity to generate Ca(2+)/calmodulin-independent activity. Autophosphorylation of the N-terminus Ser-12 and Ser-13 is required for full activation. Inactivated by protein phosphatase 2A (PPP2CA/PPP2CB) which dephosphorylates Thr-200, thereby terminating autonomous activity and helping to maintain the enzyme in its autoinhibited state. Calcium/calmodulin-dependent protein kinase that operates in the calcium-triggered CaMKK-CaMK4 signaling cascade and regulates, mainly by phosphorylation, the activity of several transcription activators, such as CREB1, MEF2D, JUN and RORA, which play pivotal roles in immune response, inflammation, and memory consolidation. In the thymus, regulates the CD4(+)/CD8(+) double positive thymocytes selection threshold during T-cell ontogeny. In CD4 memory T-cells, is required to link T-cell antigen receptor (TCR) signaling to the production of IL2, IFNG and IL4 (through the regulation of CREB and MEF2). Regulates the differentiation and survival phases of osteoclasts and dendritic cells (DCs). Mediates DCs survival by linking TLR4 and the regulation of temporal expression of BCL2. Phosphorylates the transcription activator CREB1 on 'Ser-133' in hippocampal neuron nuclei and contribute to memory consolidation and long term potentiation (LTP) in the hippocampus. Can activate the MAP kinases MAPK1/ERK2, MAPK8/JNK1 and MAPK14/p38 and stimulate transcription through the phosphorylation of ELK1 and ATF2. Can also phosphorylate in vitro CREBBP, PRM2, MEF2A and STMN1/OP18. The protein is Calcium/calmodulin-dependent protein kinase type IV (CAMK4) of Homo sapiens (Human).